A 583-amino-acid chain; its full sequence is Afadin- and alpha-actinin-binding protein (583 aa).

3 coiled-coil regions span residues 108–220 (NNVE…LAIE), 255–333 (DYEA…QLTN), and 420–453 (EEKE…AIRL). Residues 285-328 (LSPCPPLNRGGSAEESQELGDSDREERSAETSRETLDQSCEHAR) are disordered. The segment covering 305–328 (DSDREERSAETSRETLDQSCEHAR) has biased composition (basic and acidic residues). Positions 480-527 (DRMRSSSSDGQSALSVKSEPEIRTSSSKAPPVKSSAYTTFSTPKSSKS) are disordered. Residues 484 to 494 (SSSSDGQSALS) show a composition bias toward polar residues. A compositionally biased stretch (low complexity) spans 504-515 (SSSKAPPVKSSA). Residues 516-527 (YTTFSTPKSSKS) show a composition bias toward polar residues.

The protein belongs to the ADIP family.

It localises to the cell junction. It is found in the adherens junction. Its subcellular location is the cytoplasm. The protein resides in the cytoskeleton. The protein localises to the microtubule organizing center. It localises to the centrosome. It is found in the centriolar satellite. Belongs to an adhesion system, which plays a role in the organization of homotypic, interneuronal and heterotypic cell-cell adherens junctions (AJs). Involved in cell movement. Acts as a centrosome maturation factor, probably by maintaining the integrity of the pericentriolar material and proper microtubule nucleation at mitotic spindle poles. The polypeptide is Afadin- and alpha-actinin-binding protein (ssx2ip) (Oryzias latipes (Japanese rice fish)).